Here is a 573-residue protein sequence, read N- to C-terminus: Leucine aminopeptidase, chloroplastic (573 aa).

Residues 1 to 53 constitute a chloroplast transit peptide; the sequence is MATLRVSSLLASSPSSLHCNPSVFTKCQSSPRWAFSFSVTPLCSRRSKRIVHC. 2 residues coordinate Mn(2+): Lys342 and Asp347. Residue Lys354 is part of the active site. Asp367, Asp427, and Glu429 together coordinate Mn(2+). The active site involves Arg431.

Belongs to the peptidase M17 family. In terms of assembly, homohexamer (dimer of homotrimers). Mn(2+) serves as cofactor. As to expression, in tubers and floral buds of untreated plants. After abscisic acid (ABA) treatment or mechanical wounding is mostly accumulated in leaves, to a lesser extent in stems, but not in roots.

The protein localises to the plastid. The protein resides in the chloroplast. It catalyses the reaction Release of an N-terminal amino acid, Xaa-|-Yaa-, in which Xaa is preferably Leu, but may be other amino acids including Pro although not Arg or Lys, and Yaa may be Pro. Amino acid amides and methyl esters are also readily hydrolyzed, but rates on arylamides are exceedingly low.. It carries out the reaction Release of N-terminal proline from a peptide.. Presumably involved in the processing and regular turnover of intracellular proteins. The polypeptide is Leucine aminopeptidase, chloroplastic (LAP) (Solanum tuberosum (Potato)).